The following is a 179-amino-acid chain: ATP synthase subunit delta (179 aa).

This sequence belongs to the ATPase delta chain family. In terms of assembly, F-type ATPases have 2 components, F(1) - the catalytic core - and F(0) - the membrane proton channel. F(1) has five subunits: alpha(3), beta(3), gamma(1), delta(1), epsilon(1). F(0) has three main subunits: a(1), b(2) and c(10-14). The alpha and beta chains form an alternating ring which encloses part of the gamma chain. F(1) is attached to F(0) by a central stalk formed by the gamma and epsilon chains, while a peripheral stalk is formed by the delta and b chains.

It is found in the cell membrane. In terms of biological role, f(1)F(0) ATP synthase produces ATP from ADP in the presence of a proton or sodium gradient. F-type ATPases consist of two structural domains, F(1) containing the extramembraneous catalytic core and F(0) containing the membrane proton channel, linked together by a central stalk and a peripheral stalk. During catalysis, ATP synthesis in the catalytic domain of F(1) is coupled via a rotary mechanism of the central stalk subunits to proton translocation. This protein is part of the stalk that links CF(0) to CF(1). It either transmits conformational changes from CF(0) to CF(1) or is implicated in proton conduction. This is ATP synthase subunit delta from Metamycoplasma arthritidis (strain 158L3-1) (Mycoplasma arthritidis).